We begin with the raw amino-acid sequence, 492 residues long: GDP-fucose protein O-fucosyltransferase 4 (492 aa).

Topologically, residues 1 to 7 are cytoplasmic; it reads MAAGPIR. The chain crosses the membrane as a helical; Signal-anchor for type II membrane protein span at residues 8–24; that stretch reads VVLVLLGVLSVCAASGH. Topologically, residues 25–492 are lumenal; it reads GSVAEREAGG…HEIFMKRQHL (468 aa). Asn166 carries N-linked (GlcNAc...) asparagine glycosylation. Cys389 and Cys392 are disulfide-bonded. A glycan (N-linked (GlcNAc...) asparagine) is linked at Asn443.

It belongs to the glycosyltransferase 10 family.

It localises to the endoplasmic reticulum membrane. The catalysed reaction is L-threonyl-[protein] + GDP-beta-L-fucose = 3-O-(alpha-L-fucosyl)-L-threonyl-[protein] + GDP + H(+). The enzyme catalyses L-seryl-[protein] + GDP-beta-L-fucose = 3-O-(alpha-L-fucosyl)-L-seryl-[protein] + GDP + H(+). It participates in protein modification; protein glycosylation. Functionally, protein O-fucosyltransferase that specifically catalyzes O-fucosylation of serine or threonine residues in EMI domains of target proteins, such as MMRN1, MMRN2 and EMID1. Attaches fucose through an O-glycosidic linkage. O-fucosylation of EMI domain-containing proteins may be required for facilitating protein folding and secretion. Also shows minor alpha-(1,3)-fucosyltransferase activity toward activity toward biantennary N-glycan acceptors. However, this was tested with a library of synthetic substrates and this activity is unsure in vivo. This Homo sapiens (Human) protein is GDP-fucose protein O-fucosyltransferase 4.